A 626-amino-acid chain; its full sequence is NAD-dependent malic enzyme, mitochondrial (626 aa).

The transit peptide at 1-34 directs the protein to the mitochondrion; the sequence is MAIFSNQMRLSSTLLKRLHQRVAAAVNSSSSRNF. Fumarate-binding residues include Arg-91 and Arg-125. The Proton donor role is filled by Tyr-146. Arg-199 serves as a coordination point for (S)-malate. Arg-199 lines the NAD(+) pocket. Residue Lys-217 is the Proton acceptor of the active site. 3 residues coordinate a divalent metal cation: Glu-288, Asp-289, and Asp-312. NAD(+) is bound by residues Ala-348 and Ala-351. 2 residues coordinate (S)-malate: Asn-467 and Asn-512.

The protein belongs to the malic enzymes family. In terms of assembly, heterodimer of two related subunits. Requires Mg(2+) as cofactor. Mn(2+) is required as a cofactor.

The protein localises to the mitochondrion matrix. The enzyme catalyses (S)-malate + NAD(+) = pyruvate + CO2 + NADH. The sequence is that of NAD-dependent malic enzyme, mitochondrial from Solanum tuberosum (Potato).